The following is a 443-amino-acid chain: tRNA-2-methylthio-N(6)-dimethylallyladenosine synthase (443 aa).

The region spanning 3–120 (SKLYIKTFGC…LPELIDARRR (118 aa)) is the MTTase N-terminal domain. Residues Cys-12, Cys-49, Cys-83, Cys-157, Cys-161, and Cys-164 each contribute to the [4Fe-4S] cluster site. Residues 143–377 (RTTGATAFVS…KIQRNAQMIS (235 aa)) enclose the Radical SAM core domain. In terms of domain architecture, TRAM spans 378–441 (QSMVDTIQRV…SHTLRGEISD (64 aa)).

It belongs to the methylthiotransferase family. MiaB subfamily. Monomer. [4Fe-4S] cluster is required as a cofactor.

It localises to the cytoplasm. It carries out the reaction N(6)-dimethylallyladenosine(37) in tRNA + (sulfur carrier)-SH + AH2 + 2 S-adenosyl-L-methionine = 2-methylsulfanyl-N(6)-dimethylallyladenosine(37) in tRNA + (sulfur carrier)-H + 5'-deoxyadenosine + L-methionine + A + S-adenosyl-L-homocysteine + 2 H(+). In terms of biological role, catalyzes the methylthiolation of N6-(dimethylallyl)adenosine (i(6)A), leading to the formation of 2-methylthio-N6-(dimethylallyl)adenosine (ms(2)i(6)A) at position 37 in tRNAs that read codons beginning with uridine. The polypeptide is tRNA-2-methylthio-N(6)-dimethylallyladenosine synthase (Nitrosomonas eutropha (strain DSM 101675 / C91 / Nm57)).